The sequence spans 281 residues: Aspartate/glutamate leucyltransferase (281 aa).

This sequence belongs to the R-transferase family. Bpt subfamily.

It localises to the cytoplasm. The catalysed reaction is N-terminal L-glutamyl-[protein] + L-leucyl-tRNA(Leu) = N-terminal L-leucyl-L-glutamyl-[protein] + tRNA(Leu) + H(+). It catalyses the reaction N-terminal L-aspartyl-[protein] + L-leucyl-tRNA(Leu) = N-terminal L-leucyl-L-aspartyl-[protein] + tRNA(Leu) + H(+). Its function is as follows. Functions in the N-end rule pathway of protein degradation where it conjugates Leu from its aminoacyl-tRNA to the N-termini of proteins containing an N-terminal aspartate or glutamate. The polypeptide is Aspartate/glutamate leucyltransferase (Paracoccus denitrificans (strain Pd 1222)).